A 191-amino-acid polypeptide reads, in one-letter code: Xanthine phosphoribosyltransferase (191 aa).

Xanthine contacts are provided by L20 and N27. 128-132 provides a ligand contact to 5-phospho-alpha-D-ribose 1-diphosphate; sequence ANGQA. Residue K156 participates in xanthine binding.

Belongs to the purine/pyrimidine phosphoribosyltransferase family. Xpt subfamily. In terms of assembly, homodimer.

It localises to the cytoplasm. It carries out the reaction XMP + diphosphate = xanthine + 5-phospho-alpha-D-ribose 1-diphosphate. It functions in the pathway purine metabolism; XMP biosynthesis via salvage pathway; XMP from xanthine: step 1/1. Converts the preformed base xanthine, a product of nucleic acid breakdown, to xanthosine 5'-monophosphate (XMP), so it can be reused for RNA or DNA synthesis. The polypeptide is Xanthine phosphoribosyltransferase (Limosilactobacillus reuteri (strain DSM 20016) (Lactobacillus reuteri)).